Consider the following 1020-residue polypeptide: Retinoblastoma-related protein (1020 aa).

2 stretches are compositionally biased toward polar residues: residues 382–391 (SPTKTITSPL) and 398–409 (ASHTNGILGSTN). The interval 382-409 (SPTKTITSPLSPHRSPASHTNGILGSTN) is disordered. The tract at residues 415-616 (TPVSTAMTTA…EKGSSMYNSL (202 aa)) is domain A. Residues 415–869 (TPVSTAMTTA…NEIFIPAAKP (455 aa)) form a pocket region. Positions 617 to 737 (TVARPSLSAE…PGGGGETCAE (121 aa)) are spacer. The interval 738–869 (TGINIFFSKI…NEIFIPAAKP (132 aa)) is domain B.

It belongs to the retinoblastoma protein (RB) family.

The protein localises to the nucleus. Regulator of biological processes that recruits a histone deacetylase to control gene transcription. May play a role in the entry into mitosis, negatively regulating the cell proliferation. Formation of stable complexes with geminiviridae replication-associated proteins may create a cellular environment which favors viral DNA replication. This chain is Retinoblastoma-related protein (RBR), found in Ricinus communis (Castor bean).